A 245-amino-acid chain; its full sequence is Dof zinc finger protein DOF3.2 (245 aa).

A compositionally biased stretch (polar residues) spans Ser-15 to Lys-26. The tract at residues Ser-15–Arg-41 is disordered. A Dof-type zinc finger spans residues Leu-40–Arg-94. Zn(2+) is bound by residues Cys-42, Cys-45, Cys-67, and Cys-70. A disordered region spans residues Lys-91–Pro-118. Over residues Ser-96–Pro-108 the composition is skewed to polar residues.

As to quaternary structure, interacts with TCP14. The PEAR proteins (e.g. DOF2.4, DOF5.1, DOF3.2, DOF1.1, DOF5.6 and DOF5.3) form a short-range concentration gradient that peaks at protophloem sieve elements (PSE).

It is found in the nucleus. Functionally, transcription factor that negatively affects seed germination and opposes TCP14 function in the regulation of a specific set of abscisic acid-related genes. The PEAR proteins (e.g. DOF2.4, DOF5.1, DOF3.2, DOF1.1, DOF5.6 and DOF5.3) activate gene expression that promotes radial growth of protophloem sieve elements. This chain is Dof zinc finger protein DOF3.2, found in Arabidopsis thaliana (Mouse-ear cress).